We begin with the raw amino-acid sequence, 818 residues long: MVNETMKHQFKFNPLATAIFTLLCSGSIQSSYAESAGVVSNIDNNQLKASIKEAYPGQEFFQQYYVDKSAPEAQLRNNKYLSSAFCQGTWITPINPETKALDADKATSVVTADYGHYNPAGDSVLEGNVVIDQEGRTVRADKVTIDKTQTFAHAQGRVQLAQGGLLSQSDEIDYNLKTQTGNLDNSFYISEQQHAHGHAGKIERTSPNVMVLNDATYTTCPPGQKPGWKIQANKIELNQETGRGVTRGTKLYVKDVPVLAVPYFNFPIDDRRTTGILNPQFGFSNDGGIELSVPVYLNLAPNYDATITPRYLADRGAMLQGEFRYLTDGFGAGQIWGGILPSDKEYDDKDRKDFHFLHNWDINDQWSTNLEYNYASDKDYFSDLDSSPISKTDLNLRRAWELNYQHGIPGLKAQLKVEDFQTLDPEVKDVNKPYARLPQFLLNYVTGNPLGLQYEFNNDTAYFKKSINDDSAQESSGTRIYNQFATRYNYRTPAAFVIPELSVRSIQTFYDKDSIASQGLDGGSENKSVVVPQFTLDTGLNFEREGKYLQTLTPRAFYAYAPYKNQDGYPNFDSTTASISYDQLFNPYRFYGHDRLEDNNFLSLGVSYSLFDTVGLERLRASVGQSYYFEDRRVTLKQQDEIDTERNTGPVVSLSSQLNQNFTIAANSAWMSNGDNAQRDFQLYYTGDKGNLYNLGYFYRKDIPGRQDTYDQVVASFIQPIKDNWRIMGHVQYDMDNDVARELLLGVNYESCCWGISVYGRSYYNDLDDPKSPDVSEKRAIMAEITLKGLGGLNNKLASLLENRVLGFNKINQSWTQR.

The first 33 residues, 1–33, serve as a signal peptide directing secretion; the sequence is MVNETMKHQFKFNPLATAIFTLLCSGSIQSSYA.

The protein belongs to the LptD family. In terms of assembly, component of the lipopolysaccharide transport and assembly complex. Interacts with LptE and LptA.

It is found in the cell outer membrane. Functionally, together with LptE, is involved in the assembly of lipopolysaccharide (LPS) at the surface of the outer membrane. The sequence is that of LPS-assembly protein LptD from Acinetobacter baumannii (strain ATCC 19606 / DSM 30007 / JCM 6841 / CCUG 19606 / CIP 70.34 / NBRC 109757 / NCIMB 12457 / NCTC 12156 / 81).